Reading from the N-terminus, the 170-residue chain is MSQLEPRQQAFRNAMAHLSAAVNVITSNGPAGRCGITATAVCSVTDSPPTLMLCINRNSEMNTVFKANGRLCVNVLSGEHEEVARHFAGMTEVPMERRFALHDWREGLAGLPVLHGALANLQGRIAEVQEIGTHSVLLLELEDIQVLEQGDGLVYFSRSFHRLQCPRRAA.

Belongs to the non-flavoprotein flavin reductase family. HpaC subfamily. As to quaternary structure, monomer. HPA 3-hydroxylase consists of a reductase component HpaC and an oxygenase component HpaB. Some form of interactions between the reductase and the oxygenase facilitate the transfer of FADH(-) to the oxygenase in P.aeruginosa, although interactions are not required in other species.

The catalysed reaction is FADH2 + NAD(+) = FAD + NADH + 2 H(+). It functions in the pathway aromatic compound metabolism; 4-hydroxyphenylacetate degradation; pyruvate and succinate semialdehyde from 4-hydroxyphenylacetate: step 1/7. Its activity is regulated as follows. The rate of FAD reduction is independent of the presence of HPA, demonstrating that, in contrast to HPAH from A.baumannii, the activity of the HPAH reductase is not allosterically regulated by the substrate. In terms of biological role, reductase component of the 4-hydroxyphenylacetate (HPA) 3-hydroxylase. Catalyzes the reduction of FAD by NADH. The reduced flavin is then transferred to the oxygenase component HpaB. Is also able to reduce FMN and riboflavin, but preferentially binds FAD. Has no activity with NADPH as the reductant. The protein is 4-hydroxyphenylacetate 3-monooxygenase reductase component of Pseudomonas aeruginosa (strain ATCC 15692 / DSM 22644 / CIP 104116 / JCM 14847 / LMG 12228 / 1C / PRS 101 / PAO1).